The primary structure comprises 248 residues: Ureidoacrylate amidohydrolase RutB (248 aa).

D43 serves as the catalytic Proton acceptor. K152 is an active-site residue. The Nucleophile role is filled by C185.

Belongs to the isochorismatase family. RutB subfamily.

The enzyme catalyses (Z)-3-ureidoacrylate + H2O + H(+) = (Z)-3-aminoacrylate + NH4(+) + CO2. It carries out the reaction (Z)-3-ureidoacrylate + H2O = (Z)-3-aminoacrylate + carbamate + H(+). It catalyses the reaction (Z)-2-methylureidoacrylate + H2O + H(+) = (Z)-2-methylaminoacrylate + NH4(+) + CO2. Functionally, hydrolyzes ureidoacrylate to form aminoacrylate and carbamate. The carbamate hydrolyzes spontaneously, thereby releasing one of the nitrogen atoms of the pyrimidine ring as ammonia and one of its carbon atoms as CO2. The sequence is that of Ureidoacrylate amidohydrolase RutB from Serratia proteamaculans (strain 568).